Here is a 189-residue protein sequence, read N- to C-terminus: EFLFARTMIGVFKNIEYMCNRTSSKTWGKEAWKKIVVCIVSDGRAKINPRTRAVLAGLGVYQDGIAKQQVNGKDVTAHIYEYTTQVGLELKGTQGSLKPRSATPVQLLFCLKEKNQKKINSHRWFFQAFGRVLDPNICVLFDAGTKPGKDSIYQLWKAFDLEPMCGGACGEIKVMLDHGKKLYNPLIAT.

The protein belongs to the chitin synthase family. Class I subfamily.

Its subcellular location is the cell membrane. It carries out the reaction [(1-&gt;4)-N-acetyl-beta-D-glucosaminyl](n) + UDP-N-acetyl-alpha-D-glucosamine = [(1-&gt;4)-N-acetyl-beta-D-glucosaminyl](n+1) + UDP + H(+). Polymerizes chitin, a structural polymer of the cell wall and septum, by transferring the sugar moiety of UDP-GlcNAc to the non-reducing end of the growing chitin polymer. In Exophiala jeanselmei (Dematiaceous fungus), this protein is Chitin synthase 1 (CHS1).